Consider the following 201-residue polypeptide: Probable GTP-binding protein EngB (201 aa).

Residues H25–K199 enclose the EngB-type G domain. Residues G33–S40, G60–L64, D78–G81, T145–D148, and F178–S180 contribute to the GTP site. 2 residues coordinate Mg(2+): S40 and T62.

It belongs to the TRAFAC class TrmE-Era-EngA-EngB-Septin-like GTPase superfamily. EngB GTPase family. The cofactor is Mg(2+).

Its function is as follows. Necessary for normal cell division and for the maintenance of normal septation. This Buchnera aphidicola subsp. Schizaphis graminum (strain Sg) protein is Probable GTP-binding protein EngB.